The primary structure comprises 159 residues: NADH dehydrogenase [ubiquinone] 1 beta subcomplex subunit 10 (159 aa).

Belongs to the complex I NDUFB10 subunit family. As to quaternary structure, complex I is composed of 45 different subunits.

Its subcellular location is the mitochondrion inner membrane. Accessory subunit of the mitochondrial membrane respiratory chain NADH dehydrogenase (Complex I), that is believed not to be involved in catalysis. Complex I functions in the transfer of electrons from NADH to the respiratory chain. The immediate electron acceptor for the enzyme is believed to be ubiquinone. This chain is NADH dehydrogenase [ubiquinone] 1 beta subcomplex subunit 10, found in Bombyx mori (Silk moth).